A 132-amino-acid chain; its full sequence is Phosphoribosyl-AMP cyclohydrolase (132 aa).

Residue Asp79 coordinates Mg(2+). Cys80 lines the Zn(2+) pocket. Mg(2+) is bound by residues Asp81 and Asp83. Cys100 and Cys107 together coordinate Zn(2+).

Belongs to the PRA-CH family. As to quaternary structure, homodimer. Mg(2+) is required as a cofactor. Requires Zn(2+) as cofactor.

It localises to the cytoplasm. The catalysed reaction is 1-(5-phospho-beta-D-ribosyl)-5'-AMP + H2O = 1-(5-phospho-beta-D-ribosyl)-5-[(5-phospho-beta-D-ribosylamino)methylideneamino]imidazole-4-carboxamide. It participates in amino-acid biosynthesis; L-histidine biosynthesis; L-histidine from 5-phospho-alpha-D-ribose 1-diphosphate: step 3/9. Functionally, catalyzes the hydrolysis of the adenine ring of phosphoribosyl-AMP. This chain is Phosphoribosyl-AMP cyclohydrolase, found in Acidovorax ebreus (strain TPSY) (Diaphorobacter sp. (strain TPSY)).